The following is a 270-amino-acid chain: 3-methyl-2-oxobutanoate hydroxymethyltransferase (270 aa).

Aspartate 48 and aspartate 87 together coordinate Mg(2+). 3-methyl-2-oxobutanoate contacts are provided by residues 48 to 49 (DS), aspartate 87, and lysine 117. Glutamate 119 is a binding site for Mg(2+). The active-site Proton acceptor is glutamate 186.

It belongs to the PanB family. In terms of assembly, homodecamer; pentamer of dimers. It depends on Mg(2+) as a cofactor.

Its subcellular location is the cytoplasm. It catalyses the reaction 3-methyl-2-oxobutanoate + (6R)-5,10-methylene-5,6,7,8-tetrahydrofolate + H2O = 2-dehydropantoate + (6S)-5,6,7,8-tetrahydrofolate. It functions in the pathway cofactor biosynthesis; (R)-pantothenate biosynthesis; (R)-pantoate from 3-methyl-2-oxobutanoate: step 1/2. In terms of biological role, catalyzes the reversible reaction in which hydroxymethyl group from 5,10-methylenetetrahydrofolate is transferred onto alpha-ketoisovalerate to form ketopantoate. The protein is 3-methyl-2-oxobutanoate hydroxymethyltransferase of Synechococcus sp. (strain RCC307).